We begin with the raw amino-acid sequence, 185 residues long: Crossover junction endodeoxyribonuclease RuvC (185 aa).

Residues Asp7, Glu66, and Asp137 contribute to the active site. Residues Asp7, Glu66, and Asp137 each coordinate Mg(2+).

It belongs to the RuvC family. Homodimer which binds Holliday junction (HJ) DNA. The HJ becomes 2-fold symmetrical on binding to RuvC with unstacked arms; it has a different conformation from HJ DNA in complex with RuvA. In the full resolvosome a probable DNA-RuvA(4)-RuvB(12)-RuvC(2) complex forms which resolves the HJ. The cofactor is Mg(2+).

It localises to the cytoplasm. It carries out the reaction Endonucleolytic cleavage at a junction such as a reciprocal single-stranded crossover between two homologous DNA duplexes (Holliday junction).. The RuvA-RuvB-RuvC complex processes Holliday junction (HJ) DNA during genetic recombination and DNA repair. Endonuclease that resolves HJ intermediates. Cleaves cruciform DNA by making single-stranded nicks across the HJ at symmetrical positions within the homologous arms, yielding a 5'-phosphate and a 3'-hydroxyl group; requires a central core of homology in the junction. The consensus cleavage sequence is 5'-(A/T)TT(C/G)-3'. Cleavage occurs on the 3'-side of the TT dinucleotide at the point of strand exchange. HJ branch migration catalyzed by RuvA-RuvB allows RuvC to scan DNA until it finds its consensus sequence, where it cleaves and resolves the cruciform DNA. This Anaeromyxobacter dehalogenans (strain 2CP-C) protein is Crossover junction endodeoxyribonuclease RuvC.